The chain runs to 299 residues: 4-diphosphocytidyl-2-C-methyl-D-erythritol kinase (299 aa).

The active site involves Lys-11. Position 94–104 (Pro-94–Ser-104) interacts with ATP. Asp-136 is a catalytic residue.

The protein belongs to the GHMP kinase family. IspE subfamily.

It carries out the reaction 4-CDP-2-C-methyl-D-erythritol + ATP = 4-CDP-2-C-methyl-D-erythritol 2-phosphate + ADP + H(+). Its pathway is isoprenoid biosynthesis; isopentenyl diphosphate biosynthesis via DXP pathway; isopentenyl diphosphate from 1-deoxy-D-xylulose 5-phosphate: step 3/6. Functionally, catalyzes the phosphorylation of the position 2 hydroxy group of 4-diphosphocytidyl-2C-methyl-D-erythritol. The sequence is that of 4-diphosphocytidyl-2-C-methyl-D-erythritol kinase from Bordetella pertussis (strain Tohama I / ATCC BAA-589 / NCTC 13251).